A 626-amino-acid chain; its full sequence is DEAD-box ATP-dependent RNA helicase 16 (626 aa).

A disordered region spans residues 1 to 48 (MGKTKLKPVEDVNSEVVDEVEKAEEVEEQRNDREQEEEQKEEEAPKSF). Residues 9 to 47 (VEDVNSEVVDEVEKAEEVEEQRNDREQEEEQKEEEAPKS) adopt a coiled-coil conformation. The span at 12–27 (VNSEVVDEVEKAEEVE) shows a compositional bias: acidic residues. The Q motif signature appears at 46-74 (KSFEELGLDSRLIRALTKKGIEKPTLIQQ). One can recognise a Helicase ATP-binding domain in the interval 77–259 (IPYILEGKDV…KLILHNPIVL (183 aa)). 90 to 97 (AKTGSGKT) provides a ligand contact to ATP. Residues 207 to 210 (DEAD) carry the DEAD box motif. The region spanning 293 to 477 (ALLKLEVVQK…PFPLLTENAV (185 aa)) is the Helicase C-terminal domain. A coiled-coil region spans residues 356-385 (IATDDNSQTKKQKEEAKGEANKENKKNNKR). Over residues 363 to 381 (QTKKQKEEAKGEANKENKK) the composition is skewed to basic and acidic residues. 2 disordered regions span residues 363-388 (QTKKQKEEAKGEANKENKKNNKRSKP) and 568-626 (AMGN…QKTV).

It belongs to the DEAD box helicase family. DDX56/DBP9 subfamily.

The enzyme catalyses ATP + H2O = ADP + phosphate + H(+). The polypeptide is DEAD-box ATP-dependent RNA helicase 16 (RH16) (Arabidopsis thaliana (Mouse-ear cress)).